We begin with the raw amino-acid sequence, 88 residues long: ESSFPATFVPLPADSEGGEDEDLQCVCLKTTSGINPRHISSLEVIGAGTHCPSPQLLATKKTGRKICLDQQRPLYKKILKKLLDGDES.

Thr7 carries an O-linked (GalNAc...) threonine glycan. Disulfide bonds link Cys25–Cys51 and Cys27–Cys67. At Ser41 the chain carries Phosphoserine. Heparin is bound at residue 76–82 (KKILKKL).

This sequence belongs to the intercrine alpha (chemokine CxC) family. As to quaternary structure, homotetramer. Interacts with TNFAIP6 (via Link domain). Interacts with CCR1. Interacts with CXCR3. Interacts with THBD; this interaction enhances generation of activated protein C. In terms of processing, O-linked glycan consists of Gal-GalNAc disaccharide which is modified with sialic acid residues (microheterogeneity).

It localises to the secreted. In terms of biological role, chemokine released during platelet aggregation that plays a role in different biological processes including hematopoiesis, cell proliferation, differentiation, and activation. Acts via different functional receptors including CCR1, CXCR3A or CXCR3B. Upon interaction with CXCR3A receptor, induces activated T-lymphocytes migration mediated via downstream Ras/extracellular signal-regulated kinase (ERK) signaling. Neutralizes the anticoagulant effect of heparin by binding more strongly to heparin than to the chondroitin-4-sulfate chains of the carrier molecule. Plays a role in the inhibition of hematopoiesis and in the maintenance of hematopoietic stem cell (HSC) quiescence. Chemotactic for neutrophils and monocytes via CCR1. Inhibits endothelial cell proliferation. In cooperation with toll-like receptor 8/TLR8, induces chromatin remodeling and activates inflammatory gene expression via the TBK1-IRF5 axis. In addition, induces myofibroblast differentiation and collagen synthesis in different precursor cells, including endothelial cells, by stimulating endothelial-to-mesenchymal transition. Interacts with thrombomodulin/THBD to enhance the activation of protein C and thus potentiates its anticoagulant activity. In Bos taurus (Bovine), this protein is Platelet factor 4 (PF4).